The primary structure comprises 196 residues: RNA pyrophosphohydrolase (196 aa).

Residues 6-149 form the Nudix hydrolase domain; it reads GYRPNVGIVI…KRDVYRKVMK (144 aa). A Nudix box motif is present at residues 38–59; it reads GGINDNESAEQAMYRELHEEVG. The disordered stretch occupies residues 166 to 196; that stretch reads SREANSQSNSANKKYSQTKYTKRHFYKSKGQ. A compositionally biased stretch (polar residues) spans 167–184; the sequence is REANSQSNSANKKYSQTK. Over residues 185-196 the composition is skewed to basic residues; sequence YTKRHFYKSKGQ.

This sequence belongs to the Nudix hydrolase family. RppH subfamily. A divalent metal cation is required as a cofactor.

Functionally, accelerates the degradation of transcripts by removing pyrophosphate from the 5'-end of triphosphorylated RNA, leading to a more labile monophosphorylated state that can stimulate subsequent ribonuclease cleavage. In Haemophilus influenzae (strain 86-028NP), this protein is RNA pyrophosphohydrolase.